Consider the following 388-residue polypeptide: Probable mannan endo-1,4-beta-mannosidase A-1 (388 aa).

Residues 1 to 20 (MKLSPLMALAGLASAQLALA) form the signal peptide. Residues tryptophan 93 and asparagine 206 each contribute to the substrate site. Catalysis depends on glutamate 207, which acts as the Proton donor. Asparagine 264 carries an N-linked (GlcNAc...) asparagine glycan. Substrate is bound at residue tyrosine 282. Residue glutamate 315 is the Nucleophile of the active site. An N-linked (GlcNAc...) asparagine glycan is attached at asparagine 335. Residue tryptophan 345 participates in substrate binding.

Belongs to the glycosyl hydrolase 5 (cellulase A) family.

It localises to the secreted. The catalysed reaction is Random hydrolysis of (1-&gt;4)-beta-D-mannosidic linkages in mannans, galactomannans and glucomannans.. Its function is as follows. Endo-1,4-mannanase, a crucial enzyme for depolymerization of seed galactomannans and wood galactoglucomannans. The protein is Probable mannan endo-1,4-beta-mannosidase A-1 (manA-1) of Aspergillus terreus (strain NIH 2624 / FGSC A1156).